The chain runs to 155 residues: cAMP-dependent protein kinase type II-alpha regulatory subunit (155 aa).

A disordered region spans residues 1–34 (SGSQDLEPSSGLVTDAIADSESEDDEDLDVPIPS). The dimerization and phosphorylation stretch occupies residues 1–81 (SGSQDLEPSS…LQEACKDILL (81 aa)). Residues 18 to 29 (ADSESEDDEDLD) are compositionally biased toward acidic residues. Ser20 and Ser22 each carry phosphoserine. Ser41 is subject to Phosphoserine; by PKA. 3',5'-cyclic AMP contacts are provided by residues 82-155 (FKNL…ALMY) and Glu150.

This sequence belongs to the cAMP-dependent kinase regulatory chain family. In terms of assembly, the inactive form of the enzyme is composed of two regulatory chains and two catalytic chains. Activation by cAMP produces two active catalytic monomers and a regulatory dimer that binds four cAMP molecules. Interacts with AKAP4 and CBFA2T3. Interacts with the phosphorylated form of PJA2. Interacts with MYRIP; this interaction may link PKA to components of the exocytosis machinery, thus facilitating exocytosis, including insulin release. Forms a complex composed of PRKAR2A, GSK3B and GSKIP through GSKIP interaction; facilitates PKA-induced phosphorylation and regulates GSK3B activity. Interacts with ADCY8; inhibits adenylate cyclase activity through PKA phosphorylation. Phosphorylated by the activated catalytic chain. Four types of regulatory chains are found: I-alpha, I-beta, II-alpha, and II-beta. Their expression varies among tissues and is in some cases constitutive and in others inducible.

The protein localises to the cytoplasm. Its subcellular location is the cell membrane. Functionally, regulatory subunit of the cAMP-dependent protein kinases involved in cAMP signaling in cells. Type II regulatory chains mediate membrane association by binding to anchoring proteins, including the MAP2 kinase. The sequence is that of cAMP-dependent protein kinase type II-alpha regulatory subunit (PRKAR2A) from Sus scrofa (Pig).